Consider the following 307-residue polypeptide: D-alanine--D-alanine ligase (307 aa).

The ATP-grasp domain occupies 101–301 (KTVMRAAGVS…FGELVRWMVE (201 aa)). 127–182 (PLTPPYVVKPIAEGSSMGVIIVRDERSHPPQILASDEWVYGEEVLAETYVAGRELT) provides a ligand contact to ATP. Mg(2+) contacts are provided by Asp-251, Glu-268, and Asn-270.

The protein belongs to the D-alanine--D-alanine ligase family. Mg(2+) is required as a cofactor. Mn(2+) serves as cofactor.

The protein localises to the cytoplasm. It carries out the reaction 2 D-alanine + ATP = D-alanyl-D-alanine + ADP + phosphate + H(+). The protein operates within cell wall biogenesis; peptidoglycan biosynthesis. In terms of biological role, cell wall formation. In Methylorubrum extorquens (strain PA1) (Methylobacterium extorquens), this protein is D-alanine--D-alanine ligase.